A 1010-amino-acid polypeptide reads, in one-letter code: Importin-8 (1010 aa).

Positions 22-102 (AETELNQSYK…RDNIVEGIIR (81 aa)) constitute an Importin N-terminal domain. Positions 886-895 (NHSKAEKVDI) are enriched in basic and acidic residues. Residues 886–932 (NHSKAEKVDIEENEEISSEEEEETSVSAQAMQSQIGRSEEEDDDDWD) are disordered. The segment covering 896-909 (EENEEISSEEEEET) has biased composition (acidic residues). Phosphoserine is present on residues serine 902 and serine 903. Residues 910–921 (SVSAQAMQSQIG) are compositionally biased toward polar residues.

The protein belongs to the importin beta family. In terms of assembly, forms a heterodimer with KPNB1. Interacts with SRP19. Interacts with RPL23A. Binds directly to nuclear pore complexes. Interacts with LRPPRC; the interaction occurs when LRPPRC is in its RNA-free form and promotes import of LRPPRC to the nucleus to allow for EIF4E-mediated export of mRNAS from the nucleus to the cytoplasm.

The protein resides in the cytoplasm. It is found in the nucleus. Functionally, involved in nuclear protein import, either by acting as autonomous nuclear transport receptor or as an adapter-like protein in association with the importin-beta subunit KPNB1. Acting autonomously, may serve as receptor for nuclear localization signals (NLS) and promote translocation of import substrates through the nuclear pore complex (NPC) by an energy requiring, Ran-dependent mechanism. At the nucleoplasmic side of the NPC, Ran binds to importin, the importin/substrate complex dissociates and importin is re-exported from the nucleus to the cytoplasm where GTP hydrolysis releases Ran. The directionality of nuclear import is thought to be conferred by an asymmetric distribution of the GTP- and GDP-bound forms of Ran between the cytoplasm and nucleus. In vitro mediates the nuclear import of the signal recognition particle protein SRP19. May also be involved in cytoplasm-to-nucleus shuttling of a broad spectrum of other cargos, including Argonaute-microRNAs complexes, the JUN protein, RELA/NF-kappa-B p65 subunit, the translation initiation factor EIF4E and a set of receptor-activated mothers against decapentaplegic homolog (SMAD) transcription factors that play a critical role downstream of the large family of transforming growth factor beta and bone morphogenetic protein (BMP) cytokines. This is Importin-8 from Mus musculus (Mouse).